Consider the following 362-residue polypeptide: Peptide chain release factor 1 (362 aa).

Q240 carries the N5-methylglutamine modification.

Belongs to the prokaryotic/mitochondrial release factor family. Methylated by PrmC. Methylation increases the termination efficiency of RF1.

It is found in the cytoplasm. Peptide chain release factor 1 directs the termination of translation in response to the peptide chain termination codons UAG and UAA. The chain is Peptide chain release factor 1 from Bifidobacterium adolescentis (strain ATCC 15703 / DSM 20083 / NCTC 11814 / E194a).